Reading from the N-terminus, the 412-residue chain is Zinc finger protein 821 (412 aa).

The segment at 26 to 83 (RQAMMKTDFPGDLGSQRQAIQQLRDQDSSSSDSEGDEEETTQDEVSSHTSEEDGGVVK) is disordered. Acidic residues predominate over residues 58 to 67 (SEGDEEETTQ). C2H2-type zinc fingers lie at residues 116–140 (ELCQ…VYQH) and 150–172 (YMCP…LLIH). Residues 257-366 (KWALRRQNEP…EKMDMMLRAQ (110 aa)) are a coiled coil. The segment at 278–319 (RTAKKSRRDNETPEEREVRRMRDREAKRLQRMQETDEQRARR) is disordered.

Belongs to the krueppel C2H2-type zinc-finger protein family.

The protein localises to the nucleus. May be involved in transcriptional regulation. This chain is Zinc finger protein 821 (ZNF821), found in Homo sapiens (Human).